Here is a 304-residue protein sequence, read N- to C-terminus: Acetyl-coenzyme A carboxylase carboxyl transferase subunit beta (304 aa).

In terms of domain architecture, CoA carboxyltransferase N-terminal spans 23 to 292 (VWTKCDSCGQ…PNPDAPREGV (270 aa)). Zn(2+)-binding residues include cysteine 27, cysteine 30, cysteine 46, and cysteine 49. The C4-type zinc finger occupies 27–49 (CDSCGQVLYRAELERNLEVCPKC). Residues 284–304 (NPDAPREGVVVPPAPGQESEA) form a disordered region.

This sequence belongs to the AccD/PCCB family. In terms of assembly, acetyl-CoA carboxylase is a heterohexamer composed of biotin carboxyl carrier protein (AccB), biotin carboxylase (AccC) and two subunits each of ACCase subunit alpha (AccA) and ACCase subunit beta (AccD). The cofactor is Zn(2+).

It localises to the cytoplasm. The catalysed reaction is N(6)-carboxybiotinyl-L-lysyl-[protein] + acetyl-CoA = N(6)-biotinyl-L-lysyl-[protein] + malonyl-CoA. It participates in lipid metabolism; malonyl-CoA biosynthesis; malonyl-CoA from acetyl-CoA: step 1/1. Its function is as follows. Component of the acetyl coenzyme A carboxylase (ACC) complex. Biotin carboxylase (BC) catalyzes the carboxylation of biotin on its carrier protein (BCCP) and then the CO(2) group is transferred by the transcarboxylase to acetyl-CoA to form malonyl-CoA. This chain is Acetyl-coenzyme A carboxylase carboxyl transferase subunit beta, found in Salmonella arizonae (strain ATCC BAA-731 / CDC346-86 / RSK2980).